We begin with the raw amino-acid sequence, 65 residues long: Stress-associated endoplasmic reticulum protein 2 (65 aa).

Residues 38–58 traverse the membrane as a helical segment; that stretch reads GPWLLALFVFVVCGSAIFQII.

The protein belongs to the RAMP4 family. As to quaternary structure, interacts with SEC61B, SEC61A1 and the SEC61 complex. Interacts with CANX.

The protein localises to the membrane. Its subcellular location is the endoplasmic reticulum membrane. Interacts with target proteins during their translocation into the lumen of the endoplasmic reticulum. Protects unfolded target proteins against degradation during ER stress. May facilitate glycosylation of target proteins after termination of ER stress. May modulate the use of N-glycosylation sites on target proteins. The sequence is that of Stress-associated endoplasmic reticulum protein 2 (SERP2) from Bos taurus (Bovine).